A 201-amino-acid chain; its full sequence is MIKLIVGLGNPGAEYTATRHNAGFWLVDQLAREAGATLRDERRFHGFYAKARLFGEEVHLLEPQTYMNRSGQAVVALAHFFKILPTEILVAHDELDLPPGAAKLKLGSGSGGHNGLKDISAHLSSQQYWRLRIGIGHPRDLIPESARAGAKPDVANFVLKPPRKDEQDLIDAAIERALAVMPTAIKGETERAMMQLHRNGA.

Tyrosine 15 is a binding site for tRNA. The Proton acceptor role is filled by histidine 20. Residues tyrosine 66, asparagine 68, and asparagine 114 each contribute to the tRNA site.

The protein belongs to the PTH family. Monomer.

The protein localises to the cytoplasm. The catalysed reaction is an N-acyl-L-alpha-aminoacyl-tRNA + H2O = an N-acyl-L-amino acid + a tRNA + H(+). Its function is as follows. Hydrolyzes ribosome-free peptidyl-tRNAs (with 1 or more amino acids incorporated), which drop off the ribosome during protein synthesis, or as a result of ribosome stalling. Catalyzes the release of premature peptidyl moieties from peptidyl-tRNA molecules trapped in stalled 50S ribosomal subunits, and thus maintains levels of free tRNAs and 50S ribosomes. In Burkholderia mallei (strain ATCC 23344), this protein is Peptidyl-tRNA hydrolase.